Here is a 427-residue protein sequence, read N- to C-terminus: Sialic acid TRAP transporter large permease protein SiaM (427 aa).

Transmembrane regions (helical) follow at residues 11 to 31 (LLFAGMPVGFSLIFVALAFLI), 52 to 72 (FTLLAVPFFVLTGHLMNSAGI), 82 to 102 (SLVGHITGSLGHVNIMASLLF), 140 to 160 (ASCIIGPLVPPSVPLVIYGVV), 165 to 185 (IGALFLAGAIPGLLCCIALMV), 214 to 234 (AFLSLLTPVIIIGGIFSGKFT), 246 to 266 (ALFLGTVVYNTLTLQGFIEIL), 270 to 290 (VNTTAVVALMVMGVTVFGWIV), 301 to 321 (DYFLTISDNPLVLLLLINLLL), 322 to 342 (LFLGTFIESLALLLLLVPFLV), 348 to 368 (VGIDPVHFGVMAILNLMIGIL), and 394 to 414 (VLPLLVPLFIVLALVAVFPQF).

This sequence belongs to the TRAP transporter large permease family. The complex comprises the extracytoplasmic solute receptor protein SiaP, and the two transmembrane proteins SiaQ and SiaM. SiaQ and SiaM form a tight 1:1 complex.

The protein resides in the cell inner membrane. Its function is as follows. Part of the tripartite ATP-independent periplasmic (TRAP) transport system SiaPQM that catalyzes unidirectional Na(+)-dependent sialic acid uptake. The polypeptide is Sialic acid TRAP transporter large permease protein SiaM (Vibrio cholerae serotype O1 (strain ATCC 39315 / El Tor Inaba N16961)).